Here is a 205-residue protein sequence, read N- to C-terminus: Holliday junction branch migration complex subunit RuvA (205 aa).

Residues 1 to 64 are domain I; the sequence is MIGKLKGVID…EDMIRLYGFA (64 aa). The segment at 65-143 is domain II; the sequence is TQLEREWFRL…AFAGEASGTI (79 aa). The flexible linker stretch occupies residues 144-152; the sequence is GLKQELGAG. The segment at 153 to 205 is domain III; sequence AAPAPVADAVSALSNLGYSRDQAANAVAAALKETGEGADSAKLIRLGLKELSQ.

This sequence belongs to the RuvA family. As to quaternary structure, homotetramer. Forms an RuvA(8)-RuvB(12)-Holliday junction (HJ) complex. HJ DNA is sandwiched between 2 RuvA tetramers; dsDNA enters through RuvA and exits via RuvB. An RuvB hexamer assembles on each DNA strand where it exits the tetramer. Each RuvB hexamer is contacted by two RuvA subunits (via domain III) on 2 adjacent RuvB subunits; this complex drives branch migration. In the full resolvosome a probable DNA-RuvA(4)-RuvB(12)-RuvC(2) complex forms which resolves the HJ.

The protein resides in the cytoplasm. Its function is as follows. The RuvA-RuvB-RuvC complex processes Holliday junction (HJ) DNA during genetic recombination and DNA repair, while the RuvA-RuvB complex plays an important role in the rescue of blocked DNA replication forks via replication fork reversal (RFR). RuvA specifically binds to HJ cruciform DNA, conferring on it an open structure. The RuvB hexamer acts as an ATP-dependent pump, pulling dsDNA into and through the RuvAB complex. HJ branch migration allows RuvC to scan DNA until it finds its consensus sequence, where it cleaves and resolves the cruciform DNA. This chain is Holliday junction branch migration complex subunit RuvA, found in Brucella abortus (strain S19).